Reading from the N-terminus, the 767-residue chain is Photosystem I P700 chlorophyll a apoprotein A1 (767 aa).

Residues 1 to 22 (MTISPPESGEKNKKVLEDPVKA) form a disordered region. Over residues 8-22 (SGEKNKKVLEDPVKA) the composition is skewed to basic and acidic residues. 8 helical membrane passes run 76–99 (IFSAHFGHLAVIFIWMSAAFFHGA), 162–185 (LMALAIGAVVMAALMLHAGIFHYH), 201–225 (LNHHIAGLVGLGSLAWAGHCIHIGA), 309–327 (VSHHHLAFGVIAIIGGHMY), 368–391 (RHAQLAVNLAMLGSISILVSHHMY), 407–433 (LGLFTHHMWIGGLFIVGAGAHAGIAMV), 455–477 (ALISHLNWVCMWLGFHSFGLYIH), and 558–576 (LMIHHIHAFQIHVTVLILL). [4Fe-4S] cluster contacts are provided by Cys600 and Cys609. The next 2 membrane-spanning stretches (helical) occupy residues 616–637 (HVFLALFWMYNCLSIVIFHFSW) and 681–703 (ISMYGLMFLGAHFIWAFSLMFLF). Position 692 (His692) interacts with divinylchlorophyll a'. Positions 700 and 708 each coordinate divinyl chlorophyll a. Residue Trp709 participates in phylloquinone binding. The chain crosses the membrane as a helical span at residues 741–761 (AVGVTHFLVGGIATTWAFFHA).

It belongs to the PsaA/PsaB family. The PsaA/B heterodimer binds the P700 divinyl chlorophyll special pair and subsequent electron acceptors. PSI consists of a core antenna complex that captures photons, and an electron transfer chain that converts photonic excitation into a charge separation. The cyanobacterial PSI reaction center is composed of one copy each of PsaA,B,C,D,E,F,I,J,K,L,M and X, and forms trimeric complexes. It depends on PSI electron transfer chain: 5 divinyl chlorophyll a, 1 divinyl chlorophyll a', 2 phylloquinones and 3 4Fe-4S clusters. PSI core antenna: 90 divinyl chlorophyll a, 22 carotenoids, 3 phospholipids and 1 galactolipid. P700 is a divinyl chlorophyll a/divinyl chlorophyll a' dimer, A0 is one or more divinyl chlorophyll a, A1 is one or both phylloquinones and FX is a shared 4Fe-4S iron-sulfur center. as a cofactor.

The protein localises to the cellular thylakoid membrane. The catalysed reaction is reduced [plastocyanin] + hnu + oxidized [2Fe-2S]-[ferredoxin] = oxidized [plastocyanin] + reduced [2Fe-2S]-[ferredoxin]. PsaA and PsaB bind P700, the primary electron donor of photosystem I (PSI), as well as the electron acceptors A0, A1 and FX. PSI is a plastocyanin/cytochrome c6-ferredoxin oxidoreductase, converting photonic excitation into a charge separation, which transfers an electron from the donor P700 chlorophyll pair to the spectroscopically characterized acceptors A0, A1, FX, FA and FB in turn. Oxidized P700 is reduced on the lumenal side of the thylakoid membrane by plastocyanin or cytochrome c6. This Prochlorococcus marinus (strain MIT 9301) protein is Photosystem I P700 chlorophyll a apoprotein A1.